A 774-amino-acid polypeptide reads, in one-letter code: 1,4-alpha-glucan branching enzyme GlgB 1 (774 aa).

A disordered region spans residues 1 to 66 (MTPRPSSSGP…AEVAVSPAPD (66 aa)). Residues 29–40 (KPAKAAKKKAPR) show a composition bias toward basic residues. The segment covering 41 to 55 (RTTASANASATTSVS) has biased composition (low complexity). Residue D457 is the Nucleophile of the active site. E510 acts as the Proton donor in catalysis. The interval 748 to 774 (YGGGDVVNPDPVKPEPQGGTAARRASG) is disordered.

It belongs to the glycosyl hydrolase 13 family. GlgB subfamily. Monomer.

It catalyses the reaction Transfers a segment of a (1-&gt;4)-alpha-D-glucan chain to a primary hydroxy group in a similar glucan chain.. The protein operates within glycan biosynthesis; glycogen biosynthesis. Catalyzes the formation of the alpha-1,6-glucosidic linkages in glycogen by scission of a 1,4-alpha-linked oligosaccharide from growing alpha-1,4-glucan chains and the subsequent attachment of the oligosaccharide to the alpha-1,6 position. In Streptomyces coelicolor (strain ATCC BAA-471 / A3(2) / M145), this protein is 1,4-alpha-glucan branching enzyme GlgB 1 (glgB1).